Reading from the N-terminus, the 391-residue chain is Steroid side-chain-cleaving aldolase (391 aa).

Tyr-294 functions as the Proton acceptor in the catalytic mechanism. Tyr-344 (proton donor) is an active-site residue.

Belongs to the thiolase-like superfamily. As to quaternary structure, homodimer. Interacts with the ChsH1/ChsH2 hydratase via the DUF35 C-terminal region of ChsH2 (ChsH2-DUF35).

It catalyses the reaction 17-hydroxy-3-oxochol-4-en-22-oyl-CoA = androst-4-ene-3,17-dione + propanoyl-CoA. Its function is as follows. Probably involved in bile acid degradation. In vitro, when associated with the ChsH1/ChsH2 hydratase, catalyzes the retroaldol cleavage of 17-hydroxy-3-oxo-4-pregnene-20-carboxyl-CoA (17-HOPC-CoA), forming androst-4-ene-3,17-dione and propionyl-CoA. The in vivo substrate is probably a closely analogous bile acid degradation metabolite. The chain is Steroid side-chain-cleaving aldolase from Thermomonospora curvata (strain ATCC 19995 / DSM 43183 / JCM 3096 / KCTC 9072 / NBRC 15933 / NCIMB 10081 / Henssen B9).